A 190-amino-acid polypeptide reads, in one-letter code: Protein hunchback (190 aa).

3 disordered regions span residues 13-59 (EPMS…SSNL), 86-110 (AAMT…PNPM), and 142-190 (QTND…KYMA). Basic residues predominate over residues 17-31 (HHHHHSHHHGHHHML). Over residues 90–100 (PSPSNNDQNSP) the composition is skewed to polar residues. Over residues 171–190 (EPEKDHDLISNSSEDMKYMA) the composition is skewed to basic and acidic residues.

It belongs to the hunchback C2H2-type zinc-finger protein family.

It is found in the nucleus. Its function is as follows. Gap class segmentation protein that controls development of head structures. The chain is Protein hunchback (hb) from Scaptomyza crassifemur (Fruit fly).